We begin with the raw amino-acid sequence, 445 residues long: UPF0210 protein SEQ_0468 (445 aa).

The protein belongs to the UPF0210 family. In terms of assembly, homodimer.

This is UPF0210 protein SEQ_0468 from Streptococcus equi subsp. equi (strain 4047).